The chain runs to 226 residues: Ribonuclease 3 (226 aa).

Residues 6–128 (INRLQRKLGY…LIGGVFLDSD (123 aa)) form the RNase III domain. Position 41 (Glu41) interacts with Mg(2+). Asp45 is an active-site residue. Mg(2+) is bound by residues Asp114 and Glu117. Residue Glu117 is part of the active site. The 71-residue stretch at 155 to 225 (DPKTRLQEYL…AEQALKKLEL (71 aa)) folds into the DRBM domain.

This sequence belongs to the ribonuclease III family. As to quaternary structure, homodimer. It depends on Mg(2+) as a cofactor.

The protein localises to the cytoplasm. The catalysed reaction is Endonucleolytic cleavage to 5'-phosphomonoester.. Digests double-stranded RNA. Involved in the processing of primary rRNA transcript to yield the immediate precursors to the large and small rRNAs (23S and 16S). Processes some mRNAs, and tRNAs when they are encoded in the rRNA operon. Processes pre-crRNA and tracrRNA of type II CRISPR loci if present in the organism. The sequence is that of Ribonuclease 3 from Klebsiella pneumoniae (strain 342).